A 146-amino-acid chain; its full sequence is Hemoglobin subunit beta (146 aa).

The residue at position 1 (valine 1) is an N-acetylvaline. A Globin domain is found at histidine 2–histidine 146. At serine 44 the chain carries Phosphoserine. Lysine 59 is subject to N6-acetyllysine. Histidine 63 serves as a coordination point for heme b. At lysine 82 the chain carries N6-acetyllysine. Histidine 92 contributes to the heme b binding site. Residue cysteine 93 is modified to S-nitrosocysteine. N6-acetyllysine is present on lysine 144.

Belongs to the globin family. In terms of assembly, heterotetramer of two alpha chains and two beta chains. As to expression, red blood cells.

Its function is as follows. Involved in oxygen transport from the lung to the various peripheral tissues. The chain is Hemoglobin subunit beta (HBB) from Spermophilus citellus (European ground squirrel).